The chain runs to 208 residues: Large ribosomal subunit protein uL3 (208 aa).

The tract at residues 123-147 (RHGQSRGPMAHGSRYHRRPGSMGPV) is disordered.

The protein belongs to the universal ribosomal protein uL3 family. Part of the 50S ribosomal subunit. Forms a cluster with proteins L14 and L19.

Its function is as follows. One of the primary rRNA binding proteins, it binds directly near the 3'-end of the 23S rRNA, where it nucleates assembly of the 50S subunit. This chain is Large ribosomal subunit protein uL3, found in Streptococcus uberis (strain ATCC BAA-854 / 0140J).